Consider the following 435-residue polypeptide: E3 ubiquitin-protein ligase RING1 (435 aa).

Residues 46-86 (CPICLDMLKKTMTTKECLHRFCSDCIVTALRSGNKECPTCR) form an RING-type zinc finger. Residues 144–322 (KLQSQNRPQR…TEGEGNGELG (179 aa)) form a disordered region. Residues 157 to 170 (KGGGGGGGGGGNGN) are compositionally biased toward gly residues. Low complexity-rich tracts occupy residues 171–188 (GAANVAAPPAPGAPTAVG), 202–211 (SNDSNSNTNS), 222–251 (SGTSAASAITSASNAAPSSSANSGASTSAT), and 259–278 (SNPPSVRSTPSPVPSNSSSS). S202 is modified (phosphoserine). S266 bears the Phosphoserine mark. T267 carries the post-translational modification Phosphothreonine. S269 carries the post-translational modification Phosphoserine. Residues 309–322 (SNIDTEGEGNGELG) show a composition bias toward acidic residues.

Interacts with ORD. Component of PRC1 complex, which contains many PcG proteins like Pc, ph, Scm, Psc, Sce and also chromatin remodeling proteins such as histone deacetylases. This complex is distinct from the Esc/E(z) complex, at least composed of esc, E(z), Su(z)12, HDAC1/Rpd3 and Caf1-55. The two complexes however cooperate and interact together during the first 3 hours of development to establish PcG silencing. As to expression, ubiquitously expressed in syncytial blastoderm embryos. Ubiquitously expressed until stage 11. Then, it is only expressed in the neuroectoderm. Later in embryonic development, it is only expressed in the CNS. In larvae, it is expressed in all imaginal disks. Expressed in the male and female gonads.

The protein resides in the nucleus. Its subcellular location is the chromosome. It carries out the reaction S-ubiquitinyl-[E2 ubiquitin-conjugating enzyme]-L-cysteine + [acceptor protein]-L-lysine = [E2 ubiquitin-conjugating enzyme]-L-cysteine + N(6)-ubiquitinyl-[acceptor protein]-L-lysine.. It functions in the pathway protein modification; protein ubiquitination. E3 ubiquitin-protein ligase that mediates monoubiquitination of 'Lys-118' of histone H2A, thereby playing a central role in histone code and gene regulation. H2A 'Lys-118' ubiquitination gives a specific tag for epigenetic transcriptional repression. Polycomb group (PcG) protein. PcG proteins act by forming multiprotein complexes, which are required to maintain the transcriptionally repressive state of homeotic genes throughout development. PcG proteins are not required to initiate repression, but to maintain it during later stages of development. PcG complexes act via modification of histones, such as methylation, deacetylation, ubiquitination rendering chromatin heritably changed in its expressibility. May play a role in meiotic sister chromatid cohesion. The polypeptide is E3 ubiquitin-protein ligase RING1 (Sce) (Drosophila melanogaster (Fruit fly)).